The sequence spans 181 residues: Swi1-interacting protein swi3 (181 aa).

The disordered stretch occupies residues M1–K47. The span at G9 to E27 shows a compositional bias: basic and acidic residues. The segment covering E28 to P39 has biased composition (acidic residues).

This sequence belongs to the CSM3 family. Fork protection complex (FPC) consisting of swi1 and swi3 interacts with mat1 cis-acting sequences and mat1-proximal polar-terminator of replication (RTS1).

It localises to the nucleus. Its function is as follows. Forms a fork protection complex (FPC) with swi1. FPC coordinates leading and lagging strand synthesis and moves with the replication fork. It is required for programmed fork-pausing which is necessary for mating-type switching. FPC stabilizes replication forks in a configuration that is recognized by replication checkpoint sensors. It is involved in termination at the mat1-proximal polar-terminator of replication (RTS1) and also required for activation of the Rad53-like checkpoint kinase cds1. This Schizosaccharomyces pombe (strain 972 / ATCC 24843) (Fission yeast) protein is Swi1-interacting protein swi3 (swi3).